Consider the following 348-residue polypeptide: S-adenosylmethionine:tRNA ribosyltransferase-isomerase (348 aa).

It belongs to the QueA family. In terms of assembly, monomer.

Its subcellular location is the cytoplasm. It catalyses the reaction 7-aminomethyl-7-carbaguanosine(34) in tRNA + S-adenosyl-L-methionine = epoxyqueuosine(34) in tRNA + adenine + L-methionine + 2 H(+). Its pathway is tRNA modification; tRNA-queuosine biosynthesis. Transfers and isomerizes the ribose moiety from AdoMet to the 7-aminomethyl group of 7-deazaguanine (preQ1-tRNA) to give epoxyqueuosine (oQ-tRNA). The sequence is that of S-adenosylmethionine:tRNA ribosyltransferase-isomerase from Cytophaga hutchinsonii (strain ATCC 33406 / DSM 1761 / CIP 103989 / NBRC 15051 / NCIMB 9469 / D465).